A 243-amino-acid chain; its full sequence is Vesicle-associated membrane protein-associated protein B (243 aa).

Ala2 is modified (N-acetylalanine). Residues 2-218 (AKVEQVLSLE…PAPATPGKEE (217 aa)) lie on the Cytoplasmic side of the membrane. The region spanning 7 to 124 (VLSLEPQHEL…MDSKLRCVFE (118 aa)) is the MSP domain. Ser146 is modified (phosphoserine). Lys147 is covalently cross-linked (Glycyl lysine isopeptide (Lys-Gly) (interchain with G-Cter in SUMO1)). Thr150 is modified (phosphothreonine). Ser158 and Ser159 each carry phosphoserine. Residues 161–196 (LDDTEVKKVMEECKRLQSEVQRLREENKQLKEEDGL) are a coiled coil. Basic and acidic residues predominate over residues 185-197 (EENKQLKEEDGLR). The interval 185–217 (EENKQLKEEDGLRMRKPVLSNSPAPAPATPGKE) is disordered. Position 206 is a phosphoserine (Ser206). A helical; Anchor for type IV membrane protein membrane pass occupies residues 219–239 (GLSTRLLALVVLFFIVGVIIG).

The protein belongs to the VAMP-associated protein (VAP) (TC 9.B.17) family. In terms of assembly, homodimer, and heterodimer with VAPA. Interacts with VAMP1 and VAMP2. Interacts (via MSP domain) with ZFYVE27. Interacts with RMDN3. Interacts with KIF5A in a ZFYVE27-dependent manner. Interacts (via MSP domain) with STARD3 (via phospho-FFAT motif). Interacts with STARD3NL (via FFAT motif). Interacts with CERT1. Interacts with PLEKHA3 and SACM1L to form a ternary complex. Interacts with VPS13A (via FFAT motif). Interacts with RB1CC1 (via phosphorylated FFAT motif), MIGA2 (via phosphorylated FFAT motif), RMDN3 (via phosphorylated FFAT motif), OSBPL1A (via FFAT motif), KCNB1 (via phosphorylated FFAT motif) and KCNB2 (via phosphorylated FFAT motif). Interacts (via MSP domain) with WDR44 (via FFAT motif); the interactions connect the endoplasmic reticulum (ER) with the endosomal tubule.

The protein resides in the endoplasmic reticulum membrane. Functionally, endoplasmic reticulum (ER)-anchored protein that mediates the formation of contact sites between the ER and endosomes via interaction with FFAT motif-containing proteins such as STARD3 or WDR44. Interacts with STARD3 in a FFAT motif phosphorylation dependent manner. Via interaction with WDR44 participates in neosynthesized protein export. Participates in the endoplasmic reticulum unfolded protein response (UPR) by inducing ERN1/IRE1 activity. Involved in cellular calcium homeostasis regulation. This is Vesicle-associated membrane protein-associated protein B from Sus scrofa (Pig).